The sequence spans 129 residues: Lysozyme C (129 aa).

The 129-residue stretch at lysine 1 to leucine 129 folds into the C-type lysozyme domain. 4 disulfide bridges follow: cysteine 6-cysteine 127, cysteine 30-cysteine 115, cysteine 64-cysteine 80, and cysteine 76-cysteine 94. Residues glutamate 35 and aspartate 52 contribute to the active site.

The protein belongs to the glycosyl hydrolase 22 family. In terms of assembly, monomer.

It localises to the secreted. It catalyses the reaction Hydrolysis of (1-&gt;4)-beta-linkages between N-acetylmuramic acid and N-acetyl-D-glucosamine residues in a peptidoglycan and between N-acetyl-D-glucosamine residues in chitodextrins.. In terms of biological role, lysozymes have primarily a bacteriolytic function; those in tissues and body fluids are associated with the monocyte-macrophage system and enhance the activity of immunoagents. This Numida meleagris (Helmeted guineafowl) protein is Lysozyme C (LYZ).